We begin with the raw amino-acid sequence, 185 residues long: MSKSASRARLLEIIRRRSFGRGEVTLASGRKSDFYFNLKPTMMDPEGATLLAELTYEALKDEGFDYIGGLEMGAVPLAGAIAQISWIKGHPIAAFFVRKKPKEHGAKLAIEGLTRDETLAGKRIVVVEDVTTTGGSAMKAVETLREAGANVSLVFTMVDREEGAAETFAAAGLPFRALYKAREFL.

5-phospho-alpha-D-ribose 1-diphosphate is bound by residues arginine 98, lysine 99, lysine 102, histidine 104, and 128-136 (EDVTTTGGS). Positions 132 and 160 each coordinate orotate.

Belongs to the purine/pyrimidine phosphoribosyltransferase family. PyrE subfamily. Homodimer. Mg(2+) is required as a cofactor.

It catalyses the reaction orotidine 5'-phosphate + diphosphate = orotate + 5-phospho-alpha-D-ribose 1-diphosphate. Its pathway is pyrimidine metabolism; UMP biosynthesis via de novo pathway; UMP from orotate: step 1/2. Functionally, catalyzes the transfer of a ribosyl phosphate group from 5-phosphoribose 1-diphosphate to orotate, leading to the formation of orotidine monophosphate (OMP). The protein is Orotate phosphoribosyltransferase of Bradyrhizobium sp. (strain BTAi1 / ATCC BAA-1182).